Reading from the N-terminus, the 457-residue chain is Phosphoglucosamine mutase (457 aa).

Residue Ser-109 is the Phosphoserine intermediate of the active site. Positions 109, 251, 253, and 255 each coordinate Mg(2+). Ser-109 carries the post-translational modification Phosphoserine.

This sequence belongs to the phosphohexose mutase family. Mg(2+) is required as a cofactor. In terms of processing, activated by phosphorylation.

The enzyme catalyses alpha-D-glucosamine 1-phosphate = D-glucosamine 6-phosphate. Catalyzes the conversion of glucosamine-6-phosphate to glucosamine-1-phosphate. The protein is Phosphoglucosamine mutase of Bdellovibrio bacteriovorus (strain ATCC 15356 / DSM 50701 / NCIMB 9529 / HD100).